We begin with the raw amino-acid sequence, 115 residues long: uncharacterized protein (115 aa).

Residues 1 to 20 form the signal peptide; the sequence is MKTFFRTVLFGSLMAVCANS.

This is an uncharacterized protein from Escherichia coli O6:H1 (strain CFT073 / ATCC 700928 / UPEC).